The following is a 162-amino-acid chain: Photosystem II extrinsic protein V (162 aa).

The first 25 residues, 1–25 (MLKRCLWLVVTVLFAWQVFNGTAIA), serve as a signal peptide directing secretion. Heme c contacts are provided by C62, C65, H66, and H117.

Belongs to the cytochrome c family. PsbV subfamily. PSII is composed of 1 copy each of membrane proteins PsbA, PsbB, PsbC, PsbD, PsbE, PsbF, PsbH, PsbI, PsbJ, PsbK, PsbL, PsbM, PsbT, PsbX, PsbY, PsbZ, Psb30/Ycf12, peripheral proteins PsbO, CyanoQ (PsbQ), PsbU, PsbV and a large number of cofactors. It forms dimeric complexes. Heme c is required as a cofactor.

The protein resides in the cellular thylakoid membrane. Functionally, one of the extrinsic, lumenal subunits of photosystem II (PSII). PSII is a light-driven water plastoquinone oxidoreductase, using light energy to abstract electrons from H(2)O, generating a proton gradient subsequently used for ATP formation. The extrinsic proteins stabilize the structure of photosystem II oxygen-evolving complex (OEC), the ion environment of oxygen evolution and protect the OEC against heat-induced inactivation. Low-potential cytochrome c that plays a role in the OEC of PSII. The polypeptide is Photosystem II extrinsic protein V (Cyanothece sp. (strain PCC 7425 / ATCC 29141)).